We begin with the raw amino-acid sequence, 502 residues long: Ubiquitin-associated protein 1 (502 aa).

The interaction with ESCRT-I stretch occupies residues 1-95; it reads MASKKLGADF…AEAKVNSKSG (95 aa). In terms of domain architecture, UMA spans 17 to 63; that stretch reads LDDVPFKTGDKFKTPAKVGLPIGFSLPDCLQVVREVQYDFSLEKKTI. A compositionally biased stretch (basic and acidic residues) spans 86 to 100; that stretch reads AEAKVNSKSGPEGDS. Residues 86-117 form a disordered region; that stretch reads AEAKVNSKSGPEGDSKMSFSKTHSTATMPPPI. Residues 102–112 show a composition bias toward polar residues; that stretch reads MSFSKTHSTAT. A phosphoserine mark is found at S146, S205, and S289. The interval 260-290 is interaction with PTPN23; the sequence is VSNIKSLSFPKLDSDDSNQKTAKLASTFHST. 2 consecutive UBA domains span residues 389–430 and 451–498; these read SPSE…LFAH and QCSE…LMAR.

In terms of assembly, component of an ESCRT-I complex (endosomal sorting complex required for transport I) which consists of TSG101, VPS28, VPS37A and UBAP1 in a 1:1:1:1 stoichiometry. Interacts with PTPN23. Interacts (via UBA domains) with ubiquitinated proteins. As to expression, ubiquitous. Highly expressed in heart, brain, placenta, lung, liver, skeletal muscle and pancreas.

The protein resides in the cytoplasm. It is found in the cytosol. Its subcellular location is the endosome. Its function is as follows. Component of the ESCRT-I complex, a regulator of vesicular trafficking process. Binds to ubiquitinated cargo proteins and is required for the sorting of endocytic ubiquitinated cargos into multivesicular bodies (MVBs). Plays a role in the proteasomal degradation of ubiquitinated cell-surface proteins, such as EGFR and BST2. The sequence is that of Ubiquitin-associated protein 1 from Homo sapiens (Human).